Consider the following 709-residue polypeptide: Nucleobase-ascorbate transporter 11 (709 aa).

2 disordered regions span residues 1 to 28 (MDSGSGFDPDTGNNKGNGSGGGNGYGER) and 58 to 167 (TGFV…SEDG). Residues 15–25 (KGNGSGGGNGY) show a composition bias toward gly residues. Over residues 65 to 74 (SGETSTSTRT) the composition is skewed to polar residues. 3 stretches are compositionally biased toward basic and acidic residues: residues 75–89 (KFGESSDFDLPKGRD), 108–132 (NRPEIEHVTGSEPVSREEEERRLNR), and 142–151 (EGGKINKDLE). Transmembrane regions (helical) follow at residues 196 to 216 (YLSLVGSLVFIPLVIVPAMDG), 222 to 242 (ASVISTMLLLTGVTTILHCYF), 246 to 266 (LPLVQGSSFVYLAPVLVVINS), 288 to 308 (IIVGSLFQCILGFSGLMSLLL), 310 to 330 (FINPVVVAPTVAAVGLAFFSY), 336 to 356 (GTCVEISVPLILLLLIFTLYL), 369 to 389 (IYAVPLSALLIWTYAFFLTVG), 454 to 474 (IIMIFVSLVASVDSVGTYHSA), 532 to 552 (LVIGAMFLIVLSFLGKLGAIL), 555 to 575 (IPQALAASVLCFIWALTVSLG), 590 to 610 (ITIVGVSLFLGLSIPAYFQQY), and 642 to 662 (FAMNAVLSLNMVVTFLLAFIL).

The protein belongs to the nucleobase:cation symporter-2 (NCS2) (TC 2.A.40) family. In terms of tissue distribution, expressed in leaf primordia and vasculature of pedicels, rosette leaves, sepals, carpels and siliques. Expressed in the root central cylinder.

Its subcellular location is the membrane. The protein is Nucleobase-ascorbate transporter 11 (NAT11) of Arabidopsis thaliana (Mouse-ear cress).